Reading from the N-terminus, the 819-residue chain is FYN-binding protein 1 (819 aa).

Residues 1-45 (MAKFNTGSNPTEEAATSSRPFKVAGQSSPSGIQSRKNLFDNQGNA) are compositionally biased toward polar residues. The tract at residues 1-490 (MAKFNTGSNP…REKKEQELKK (490 aa)) is disordered. Lysine 3 bears the N6-acetyllysine mark. Serine 28 and serine 46 each carry phosphoserine. Residues 69-79 (TYEEKPEKEPK) show a composition bias toward basic and acidic residues. Positions 150-160 (GPKPGPAPPVP) are enriched in pro residues. Residue serine 222 is modified to Phosphoserine. Composition is skewed to basic and acidic residues over residues 237–248 (PPKEDPEDKDHG) and 273–285 (NFEE…KTDL). Position 318 is a phosphoserine (serine 318). Composition is skewed to pro residues over residues 342–351 (GPPPPKPNRP) and 380–412 (LPPP…PRNI). Residues 439–453 (LEEEQESEGETYEDI) are compositionally biased toward acidic residues. Residue serine 445 is modified to Phosphoserine. Residues 448-495 (ETYEDIDSSKERDKKREKEEKKRLELERKEQKEREKKEQELKKKFKLT) adopt a coiled-coil conformation. Over residues 454–489 (DSSKERDKKREKEEKKRLELERKEQKEREKKEQELK) the composition is skewed to basic and acidic residues. Positions 479 to 493 (KEREKKEQELKKKFK) match the Nuclear localization signal motif. Residues 499-560 (QVIHHAKACC…KTTAVEIDYD (62 aa)) form the SH3 1 domain. Tyrosine 559 bears the Phosphotyrosine mark. Phosphoserine occurs at positions 561 and 568. Positions 584 to 587 (YDDV) match the SH2-binding; to LCP2 motif. Disordered stretches follow at residues 589 to 635 (EQDA…DEKT) and 649 to 728 (KDDR…EKEE). Residues 610–626 (TDDEIYDGIEEEDDDDG) are compositionally biased toward acidic residues. The SH2-binding; to FYN signature appears at 615–618 (YDGI). A compositionally biased stretch (basic and acidic residues) spans 649-664 (KDDRKKSIREKPKVSE). A compositionally biased stretch (polar residues) spans 668-677 (NEGSSLPSQH). A compositionally biased stretch (acidic residues) spans 682–692 (VGEEVYDDVDA). Tyrosine 687 carries the post-translational modification Phosphotyrosine. The short motif at 710–736 (RAKTEEKDPKKLKKQEKEEKDLRKKFK) is the Nuclear localization signal element. Positions 711–728 (AKTEEKDPKKLKKQEKEE) are enriched in basic and acidic residues. An SH3 2 domain is found at 736 to 804 (KYDGEIRVLY…LRSYLVDNDG (69 aa)).

In terms of assembly, part of a complex consisting of SKAP2, FYB1 and PTPNS1. Part of a complex consisting of SKAP2, FYB1 and PIRB. Part of a complex consisting of SKAP1, FYB1 and CLNK. Interacts with CLNK (via its SH2 domain); this interaction allows SKAP1 and FYB1 to recruit FYN to the complex, thus promoting the phosphorylation of CLNK by FYN. Interacts with FYN. Interacts with LCP2. Interacts with SKAP1. Interacts with SKAP2. Interacts with FASLG. Interacts with EVL. Interacts with TMEM47. Interacts with LCK. In terms of processing, T-cell receptor ligation leads to increased tyrosine phosphorylation. As to expression, expressed in hematopoietic tissues such as myeloid and T-cells, spleen and thymus. Not expressed in B-cells, nor in non-lymphoid tissues. FYB-130 is preferentially expressed in mature T-cells compared to FYB-120, whereas thymocytes showed a greater relative amount of FYB-120. Expressed in podocytes.

Its subcellular location is the cytoplasm. It localises to the nucleus. The protein resides in the cell junction. Functionally, acts as an adapter protein of the FYN and LCP2 signaling cascades in T-cells. May play a role in linking T-cell signaling to remodeling of the actin cytoskeleton. Modulates the expression of IL2. Involved in platelet activation. Prevents the degradation of SKAP1 and SKAP2. May be involved in high affinity immunoglobulin epsilon receptor signaling in mast cells. In Mus musculus (Mouse), this protein is FYN-binding protein 1 (Fyb1).